The sequence spans 175 residues: Large ribosomal subunit protein uL22 (175 aa).

Residues valine 113–aspartate 175 form a disordered region. Over residues lysine 136–lysine 154 the composition is skewed to low complexity. Positions glutamate 166 to aspartate 175 are enriched in basic and acidic residues.

It belongs to the universal ribosomal protein uL22 family. Part of the 50S ribosomal subunit.

Its function is as follows. This protein binds specifically to 23S rRNA; its binding is stimulated by other ribosomal proteins, e.g. L4, L17, and L20. It is important during the early stages of 50S assembly. It makes multiple contacts with different domains of the 23S rRNA in the assembled 50S subunit and ribosome. In terms of biological role, the globular domain of the protein is located near the polypeptide exit tunnel on the outside of the subunit, while an extended beta-hairpin is found that lines the wall of the exit tunnel in the center of the 70S ribosome. In Mycobacterium leprae (strain TN), this protein is Large ribosomal subunit protein uL22.